The chain runs to 349 residues: 6-phosphogluconolactonase (349 aa).

The interval 125 to 151 (LQSPVSEAAHTGKGPHERQEKPHTHYA) is disordered. A compositionally biased stretch (basic and acidic residues) spans 138 to 147 (GPHERQEKPH).

Belongs to the cycloisomerase 2 family.

The enzyme catalyses 6-phospho-D-glucono-1,5-lactone + H2O = 6-phospho-D-gluconate + H(+). It functions in the pathway carbohydrate degradation; pentose phosphate pathway; D-ribulose 5-phosphate from D-glucose 6-phosphate (oxidative stage): step 2/3. Catalyzes the hydrolysis of 6-phosphogluconolactone to 6-phosphogluconate. This chain is 6-phosphogluconolactonase (pgl), found in Bacillus subtilis (strain 168).